A 90-amino-acid chain; its full sequence is Arminin 45266 (90 aa).

The first 20 residues, 1-20 (MKSASLILFVALVALTYARS), serve as a signal peptide directing secretion. The propeptide occupies 21-59 (YEDVKEEIKNEVEKEILDDLEEENDELDDNTQEVNDPRA). Thr87 is subject to Threonine amide.

Belongs to the arminin family. As to expression, expressed in entodermal epithelium along the body column.

It localises to the secreted. The protein localises to the target cell membrane. Antimicrobial peptide with a broad-spectrum antimicrobial activity. Keeps its antibacterial activity under a wide range of salt concentrations that mimic physiological conditions of human blood, which is surprising, since Hydra is an obligate freshwater animal with nearly no salt tolerance. Does not affect red blood cells. This is Arminin 45266 from Hydra vulgaris (Hydra).